Here is a 233-residue protein sequence, read N- to C-terminus: Putative N-acetylmannosamine-6-phosphate 2-epimerase (233 aa).

It belongs to the NanE family.

The catalysed reaction is an N-acyl-D-glucosamine 6-phosphate = an N-acyl-D-mannosamine 6-phosphate. It participates in amino-sugar metabolism; N-acetylneuraminate degradation; D-fructose 6-phosphate from N-acetylneuraminate: step 3/5. In terms of biological role, converts N-acetylmannosamine-6-phosphate (ManNAc-6-P) to N-acetylglucosamine-6-phosphate (GlcNAc-6-P). The sequence is that of Putative N-acetylmannosamine-6-phosphate 2-epimerase from Yersinia pseudotuberculosis serotype IB (strain PB1/+).